We begin with the raw amino-acid sequence, 308 residues long: Pycsar effector protein PaPycTIR (308 aa).

Position 54–143 (L54–R143) interacts with a nucleoside 3',5'-cyclic phosphate. The interval V160–Y278 is TIR-like.

The protein resides in the cytoplasm. The enzyme catalyses NAD(+) + H2O = ADP-D-ribose + nicotinamide + H(+). Pycsar (pyrimidine cyclase system for antiphage resistance) provides immunity against bacteriophage. The pyrimidine cyclase (PycC) synthesizes cyclic nucleotides in response to infection; these serve as specific second messenger signals. The signals activate the adjacent effector, leading to bacterial cell death and abortive phage infection. A clade A Pycsar system. In terms of biological role, the effector gene of a two-gene Pycsar system. Expression of this and adjacent uridylate cyclase PaPycC (AC P0DV40) probably confers resistance to bacteriophage. The genes are probably only expressed in response to bacteriophage infection. Probably only responds to cUMP (produced by its cognate NTP cyclase), acts by depleting cellular NAD(+) levels. This is Pycsar effector protein PaPycTIR from Pseudomonas aeruginosa.